Reading from the N-terminus, the 174-residue chain is NADH-quinone oxidoreductase subunit B 2 (174 aa).

[4Fe-4S] cluster contacts are provided by cysteine 38, cysteine 39, cysteine 104, and cysteine 133.

This sequence belongs to the complex I 20 kDa subunit family. NDH-1 is composed of 14 different subunits. Subunits NuoB, C, D, E, F, and G constitute the peripheral sector of the complex. It depends on [4Fe-4S] cluster as a cofactor.

The protein resides in the cell membrane. It catalyses the reaction a quinone + NADH + 5 H(+)(in) = a quinol + NAD(+) + 4 H(+)(out). Functionally, NDH-1 shuttles electrons from NADH, via FMN and iron-sulfur (Fe-S) centers, to quinones in the respiratory chain. The immediate electron acceptor for the enzyme in this species is believed to be ubiquinone. Couples the redox reaction to proton translocation (for every two electrons transferred, four hydrogen ions are translocated across the cytoplasmic membrane), and thus conserves the redox energy in a proton gradient. This chain is NADH-quinone oxidoreductase subunit B 2, found in Chloroflexus aurantiacus (strain ATCC 29366 / DSM 635 / J-10-fl).